We begin with the raw amino-acid sequence, 61 residues long: MLKYAIIFAIISLIAGALGFTGVAAGSAAIAKVLFVVFLVLAVLFVVLALLGIGAARKAIK.

The next 2 helical transmembrane spans lie at 5 to 25 and 33 to 53; these read AIIF…GVAA and VLFV…LLGI.

The protein belongs to the UPF0391 family.

It is found in the cell membrane. This Acidovorax sp. (strain JS42) protein is UPF0391 membrane protein Ajs_0703.